The sequence spans 425 residues: UPF0597 protein VP2173 (425 aa).

This sequence belongs to the UPF0597 family.

The sequence is that of UPF0597 protein VP2173 from Vibrio parahaemolyticus serotype O3:K6 (strain RIMD 2210633).